The chain runs to 151 residues: Inorganic triphosphatase (151 aa).

The CYTH domain occupies 1–148 (MTEIERKFLV…KRYKNKALAL (148 aa)). Tyrosine 27 acts as the Proton acceptor in catalysis.

In terms of assembly, homodimer.

The catalysed reaction is triphosphate + H2O = phosphate + diphosphate. Activated by magnesium and mangenese ions, and inhibited by calcium, zinc and copper ions. Involved in the hydrolysis of the beta-gamma-phosphoanhydride linkage of triphosphate-containing substrates (inorganic or nucleoside-linked). Catalyzes the hydrolysis of inorganic triphosphate (PPPi). The enzyme has a strong preference for linear PPPi compared with cyclic PPPi (cyclic trimetaphosphate) and to the linear P4. The longer chains polyphosphate are not hydrolyzed. It has only a slight thiamine triphosphatase (ThTPase) activity. Nucleoside triphosphatase activity is negligible in the presence of magnesium, but a small activity is observed in the presence of manganese, in particular with GTP. The protein is Inorganic triphosphatase of Nitrosomonas europaea (strain ATCC 19718 / CIP 103999 / KCTC 2705 / NBRC 14298).